The primary structure comprises 311 residues: Lipoyl synthase (311 aa).

[4Fe-4S] cluster-binding residues include Cys-36, Cys-41, Cys-47, Cys-66, Cys-70, Cys-73, and Ser-280. Residues 51-269 enclose the Radical SAM core domain; it reads RDGPGTATFM…RVAESEFGFL (219 aa).

This sequence belongs to the radical SAM superfamily. Lipoyl synthase family. The cofactor is [4Fe-4S] cluster.

Its subcellular location is the cytoplasm. The catalysed reaction is [[Fe-S] cluster scaffold protein carrying a second [4Fe-4S](2+) cluster] + N(6)-octanoyl-L-lysyl-[protein] + 2 oxidized [2Fe-2S]-[ferredoxin] + 2 S-adenosyl-L-methionine + 4 H(+) = [[Fe-S] cluster scaffold protein] + N(6)-[(R)-dihydrolipoyl]-L-lysyl-[protein] + 4 Fe(3+) + 2 hydrogen sulfide + 2 5'-deoxyadenosine + 2 L-methionine + 2 reduced [2Fe-2S]-[ferredoxin]. It functions in the pathway protein modification; protein lipoylation via endogenous pathway; protein N(6)-(lipoyl)lysine from octanoyl-[acyl-carrier-protein]: step 2/2. Catalyzes the radical-mediated insertion of two sulfur atoms into the C-6 and C-8 positions of the octanoyl moiety bound to the lipoyl domains of lipoate-dependent enzymes, thereby converting the octanoylated domains into lipoylated derivatives. In Halobacterium salinarum (strain ATCC 29341 / DSM 671 / R1), this protein is Lipoyl synthase.